We begin with the raw amino-acid sequence, 914 residues long: Dynamin-2A (914 aa).

M1 is modified (N-acetylmethionine). Residues 35 to 303 form the Dynamin-type G domain; that stretch reads PATFLNVVAL…IRSRMKLRLP (269 aa). The G1 motif stretch occupies residues 45–52; that stretch reads GNVGAGKS. GTP is bound at residue 45 to 52; that stretch reads GNVGAGKS. The tract at residues 71-73 is G2 motif; sequence ATR. Residues 143–146 are G3 motif; sequence DLPG. Residues 143–147 and 204–207 contribute to the GTP site; these read DLPGL and GKID. Residues 204 to 207 form a G4 motif region; sequence GKID. Positions 238–241 are G5 motif; that stretch reads AVIG. Basic and acidic residues predominate over residues 507 to 522; sequence RREEELKGRSSKKGQD. 2 disordered regions span residues 507 to 570 and 629 to 648; these read RREE…TAGP and PEDEVEKSKSSKDKKANGPD. Residues 523–535 show a composition bias toward polar residues; sequence AEQSLLSRATSPQ. Basic and acidic residues-rich tracts occupy residues 547–560 and 634–645; these read SMKDKPSPQDKETP and EKSKSSKDKKAN. A PH domain is found at 572 to 696; it reads GEITAGYLMK…WINKLQKVIQ (125 aa). The GED domain occupies 730 to 823; the sequence is LRWMSQEVRG…QLSIHDNRAA (94 aa). Residues 781-805 adopt a coiled-coil conformation; it reads NERIESLIQEDQNVKRRRERYQKQS. Residues 821 to 914 form a disordered region; that stretch reads RAAAASSYSD…PPPTGSAYRY (94 aa). Polar residues-rich tracts occupy residues 826 to 839 and 852 to 866; these read SSYSDNSGTESSPR and AFNSAANGPSDSLSK.

This sequence belongs to the TRAFAC class dynamin-like GTPase superfamily. Dynamin/Fzo/YdjA family. In terms of assembly, binds PtdIns3P. Interacts with SH3P3 (via SH3 domain) and (via C-terminus) with GAMMA-ADR. May homooligomerize or heterooligomerize.

Its subcellular location is the cytoplasm. The protein localises to the cytosol. The protein resides in the golgi apparatus membrane. It is found in the cytoskeleton. It localises to the phragmoplast. Its subcellular location is the cytoplasmic vesicle. The protein localises to the clathrin-coated vesicle. The catalysed reaction is GTP + H2O = GDP + phosphate + H(+). With respect to regulation, increased GTPase activity in the presence of phosphatidic acid. Microtubule-associated force-producing protein involved in clathrin-mediated vesicle trafficking from the trans-Golgi network to the central vacuole. Able to bind and hydrolyze GTP. Binds specifically to phosphatidylinositol 3-phosphate (PtdIns3P). The chain is Dynamin-2A (DRP2A) from Arabidopsis thaliana (Mouse-ear cress).